The primary structure comprises 536 residues: MKQSSNVPAFLSKLWTLVEETHTNEFITWSQNGQSFLVLDEQRFAKEILPKYFKHNNMASFVRQLNMYGFRKVVHIDSGIVKQERDGPVEFQHPYFKQGQDDLLENIKRKVSSSKPEENKIRQEDLTKIISSAQKVQIKQETIESRLSELKSENESLWKEVSELRAKHAQQQQVIRKIVQFIVTLVQNNQLVSLKRKRPLLLNTNGAQKKNLFQHIVKEPTDNHHHKVPHSRTEGLKPRERISDDIIIYDVTDDNADEENIPVIPETNEDVISDPSNCSQYPDIVIVEDDNEDEYAPVIQSGEQNEPARESLSSGSDGSSPLMSSAVQLNGSSSLTSEDPVTMMDSILNDNINLLGKVELLDYLDSIDCSLEDFQAMLSGRQFSIDPDLLVDLFTSSVQMNPTDYINNTKSENKGLETTKNNVVQPVSEEGRKSKSKPDKQLIQYTAFPLLAFLDGNPASSVEQASTTASSEVLSSVDKPIEVDELLDSSLDPEPTQSKLVRLEPLTEAEASEATLFYLCELAPAPLDSDMPLLDS.

Glycyl lysine isopeptide (Lys-Gly) (interchain with G-Cter in SUMO2) cross-links involve residues K2 and K82. The DNA-binding element occupies 7–112 (VPAFLSKLWT…LLENIKRKVS (106 aa)). Residues 108–122 (KRKVSSSKPEENKIR) carry the Nuclear localization signal motif. Residues 119 to 192 (NKIRQEDLTK…VTLVQNNQLV (74 aa)) are hydrophobic repeat HR-A/B. Residues K135, K139, K151, K210, K218, and K237 each participate in a glycyl lysine isopeptide (Lys-Gly) (interchain with G-Cter in SUMO2) cross-link. A Nuclear localization signal motif is present at residues 195–210 (KRKRPLLLNTNGAQKK). Residues 300–337 (QSGEQNEPARESLSSGSDGSSPLMSSAVQLNGSSSLTS) form a disordered region. The segment covering 311–325 (SLSSGSDGSSPLMSS) has biased composition (low complexity). The span at 326–337 (AVQLNGSSSLTS) shows a compositional bias: polar residues. The tract at residues 360 to 385 (LLDYLDSIDCSLEDFQAMLSGRQFSI) is hydrophobic repeat HR-C. Residues 407-438 (NNTKSENKGLETTKNNVVQPVSEEGRKSKSKP) form a disordered region. The span at 429–438 (EEGRKSKSKP) shows a compositional bias: basic and acidic residues.

The protein belongs to the HSF family. As to quaternary structure, DNA-binding homotrimer in stressed or heat shocked cells, otherwise found as a homodimer.

The protein localises to the cytoplasm. Its subcellular location is the nucleus. Functionally, DNA-binding protein that specifically binds heat shock promoter elements (HSE) and activates transcription. In higher eukaryotes, HSF is unable to bind to the HSE unless the cells are heat shocked. This chain is Heat shock factor protein 2 (HSF2), found in Homo sapiens (Human).